A 547-amino-acid polypeptide reads, in one-letter code: Chaperonin GroEL (547 aa).

Residues 30–33 (TLGP), 87–91 (DGTTT), glycine 414, 478–480 (DAL), and aspartate 494 each bind ATP.

It belongs to the chaperonin (HSP60) family. In terms of assembly, forms a cylinder of 14 subunits composed of two heptameric rings stacked back-to-back. Interacts with the co-chaperonin GroES.

It is found in the cytoplasm. It catalyses the reaction ATP + H2O + a folded polypeptide = ADP + phosphate + an unfolded polypeptide.. Functionally, together with its co-chaperonin GroES, plays an essential role in assisting protein folding. The GroEL-GroES system forms a nano-cage that allows encapsulation of the non-native substrate proteins and provides a physical environment optimized to promote and accelerate protein folding. This is Chaperonin GroEL from Desulforudis audaxviator (strain MP104C).